The sequence spans 60 residues: Acrosin (60 aa).

N-linked (GlcNAc...) asparagine glycosylation occurs at Asn3. One can recognise a Peptidase S1 domain in the interval 24 to 60; the sequence is IIGGQDAAHGSWPWMVSLQIFTYHNNRRYHVCGGSLL.

It belongs to the peptidase S1 family. As to quaternary structure, heavy chain (catalytic) and a light chain linked by two disulfide bonds. Forms a heterodimer with SERPINA5.

The catalysed reaction is Preferential cleavage: Arg-|-Xaa, Lys-|-Xaa.. Inhibited by SERPINA5. In terms of biological role, acrosin is the major protease of mammalian spermatozoa. It is a serine protease of trypsin-like cleavage specificity, it is synthesized in a zymogen form, proacrosin and stored in the acrosome. The polypeptide is Acrosin (ACR) (Capra hircus (Goat)).